We begin with the raw amino-acid sequence, 25 residues long: Hemocyanin subunit 2 (25 aa).

Belongs to the tyrosinase family. Hemocyanin subfamily. In terms of tissue distribution, hemolymph.

It localises to the secreted. The protein localises to the extracellular space. Its function is as follows. Hemocyanins are copper-containing oxygen carriers occurring freely dissolved in the hemolymph of many mollusks and arthropods. The chain is Hemocyanin subunit 2 from Carcinus maenas (Common shore crab).